The primary structure comprises 373 residues: MKIIHTADWHLGKILNGKQLLEDQTYILDMFVEKMKEEEPDIIVIAGDLYDTTYPSKDAIMLLEQAIGKLNLELRIPIIMISGNHDGKERLNYGASWFEHNQLFIRTDFTSINSPIEINGVNFYTLPYATVSEMKHYFEDDTIETHQQGITRCIETIAPAIDEVAVNILISHLTVQGGKTSDSERPLTIGTVESVQKGVFDIFDYVMLGHLHHPFSIEDDKIKYSGSLLQYSFSEAGQAKGYRRVTINDGIINDVFIPLKSLRQLEIISGEYNDVINEKVHVKNKDNYLHFKLKNMSHITDPMMSLKQIYPNTLALTNETFNYNEENNTIEISEKDDMSIIEMFYNHITDKKLSDIQSKKIKNILENELRKED.

Belongs to the SbcD family. Heterodimer of SbcC and SbcD.

Its function is as follows. SbcCD cleaves DNA hairpin structures. These structures can inhibit DNA replication and are intermediates in certain DNA recombination reactions. The complex acts as a 3'-&gt;5' double strand exonuclease that can open hairpins. It also has a 5' single-strand endonuclease activity. The chain is Nuclease SbcCD subunit D (sbcD) from Staphylococcus aureus (strain bovine RF122 / ET3-1).